The following is a 426-amino-acid chain: MVAPLAEVDPDIAELLGKELGRQRDTLEMIASENFVPRSVLQAQGSVLTNKYAEGLPGRRYYDGCEHVDVVENIARDRAKALFGADFANVQPHSGAQANAAVLHALMSPGERLLGLDLANGGHLTHGMRLNFSGKLYETGFYGVDATTHLIDMDAVRAKALEFRPKVLIAGWSAYPRILDFAAFRSIADEVGAKLWVDMAHFAGLVAVGLHPSPVPHADVVSTTVHKTLGGGRSGLILGKQEFATAINSAVFPGQQGGPLMHVIAGKAVALKIATTPEFTDRQQRTLAGARILADRLTAADVTKAGVSVVSGGTDVHLVLVDLRNSPFDGQAAEDLLHEVGITVNRNVVPNDPRPPMVTSGLRIGTPALATRGFGEAEFTEVADIIATVLTTGGSVDVAALRQQVTRLARDFPLYGGLEDWSLAGR.

(6S)-5,6,7,8-tetrahydrofolate-binding positions include Leu118 and Gly122–Leu124. Position 227 is an N6-(pyridoxal phosphate)lysine (Lys227).

This sequence belongs to the SHMT family. In terms of assembly, homodimer. Pyridoxal 5'-phosphate serves as cofactor.

It localises to the cytoplasm. The enzyme catalyses (6R)-5,10-methylene-5,6,7,8-tetrahydrofolate + glycine + H2O = (6S)-5,6,7,8-tetrahydrofolate + L-serine. It functions in the pathway one-carbon metabolism; tetrahydrofolate interconversion. The protein operates within amino-acid biosynthesis; glycine biosynthesis; glycine from L-serine: step 1/1. Functionally, catalyzes the reversible interconversion of serine and glycine with tetrahydrofolate (THF) serving as the one-carbon carrier. This reaction serves as the major source of one-carbon groups required for the biosynthesis of purines, thymidylate, methionine, and other important biomolecules. Also exhibits THF-independent aldolase activity toward beta-hydroxyamino acids, producing glycine and aldehydes, via a retro-aldol mechanism. In Mycobacterium leprae (strain Br4923), this protein is Serine hydroxymethyltransferase.